Here is a 332-residue protein sequence, read N- to C-terminus: MSTVKEQLIQNLAPDEKQSRCKITVVGVGNVGMACAISILLKGLADELALVDADENKLKGEALDLLHGSLFLSTPKIVFGKDYSVSANSKLVIITAGARMVSGESRLALLQRNVTSMKAIVPGVIQNSPDCKIMIVTNPVDILTYVVWKISGLPVSSVIGSGCNLDSARFRYLIGEKLGVNPSSCHGWVLGEHGDSSVPIWSGVNIAGVTLKSLNPAIGSDSDKEQWKTVHKQVVDGGYEVLNLKGYTSWAIALSVTDIAASILKNLKRVHAVTTLVKGLYGIKEEIFLSIPCVLGQSGITDLVKVNMNTEEEALFKKSCDILWNIQKDLQL.

Ser2 carries the blocked amino end (Ser) modification. NAD(+)-binding positions include 29–57 (GNVG…DENK) and Arg99. Residues Arg106, Asn138, and Arg169 each contribute to the substrate site. Residue Asn138 participates in NAD(+) binding. His193 (proton acceptor) is an active-site residue. Thr248 is a substrate binding site.

It belongs to the LDH/MDH superfamily. LDH family. As to quaternary structure, homotetramer. Interacts with RABL2/RABL2A; binds preferentially to GTP-bound RABL2.

It localises to the cytoplasm. It carries out the reaction (S)-lactate + NAD(+) = pyruvate + NADH + H(+). It participates in fermentation; pyruvate fermentation to lactate; (S)-lactate from pyruvate: step 1/1. In terms of biological role, possible role in sperm motility. This is L-lactate dehydrogenase C chain (Ldhc) from Rattus norvegicus (Rat).